Here is a 328-residue protein sequence, read N- to C-terminus: Glycerol-3-phosphate dehydrogenase [NAD(P)+] (328 aa).

3 residues coordinate NADPH: W15, R35, and K108. Sn-glycerol 3-phosphate is bound by residues K108, G136, and S138. A140 contacts NADPH. Residues K191, D244, S254, R255, and N256 each coordinate sn-glycerol 3-phosphate. Residue K191 is the Proton acceptor of the active site. R255 is an NADPH binding site. NADPH contacts are provided by L275 and E277.

This sequence belongs to the NAD-dependent glycerol-3-phosphate dehydrogenase family.

It localises to the cytoplasm. The catalysed reaction is sn-glycerol 3-phosphate + NAD(+) = dihydroxyacetone phosphate + NADH + H(+). The enzyme catalyses sn-glycerol 3-phosphate + NADP(+) = dihydroxyacetone phosphate + NADPH + H(+). The protein operates within membrane lipid metabolism; glycerophospholipid metabolism. In terms of biological role, catalyzes the reduction of the glycolytic intermediate dihydroxyacetone phosphate (DHAP) to sn-glycerol 3-phosphate (G3P), the key precursor for phospholipid synthesis. This chain is Glycerol-3-phosphate dehydrogenase [NAD(P)+], found in Azorhizobium caulinodans (strain ATCC 43989 / DSM 5975 / JCM 20966 / LMG 6465 / NBRC 14845 / NCIMB 13405 / ORS 571).